A 682-amino-acid chain; its full sequence is Glucan endo-1,3-beta-glucosidase A1 (682 aa).

A signal peptide spans M1–A38. In terms of domain architecture, GH16 spans Y391–Q682. The active-site Nucleophile is the E552. Residue E557 is the Proton donor of the active site.

It belongs to the glycosyl hydrolase 16 family.

The protein localises to the secreted. The enzyme catalyses Hydrolysis of (1-&gt;3)-beta-D-glucosidic linkages in (1-&gt;3)-beta-D-glucans.. In terms of biological role, lysis of cellular walls containing beta-1,3-glucans. Implicated in the defense against fungal pathogens. This Niallia circulans (Bacillus circulans) protein is Glucan endo-1,3-beta-glucosidase A1 (glcA).